Here is a 79-residue protein sequence, read N- to C-terminus: Small ribosomal subunit protein bS18 (79 aa).

Belongs to the bacterial ribosomal protein bS18 family. Part of the 30S ribosomal subunit. Forms a tight heterodimer with protein bS6.

Binds as a heterodimer with protein bS6 to the central domain of the 16S rRNA, where it helps stabilize the platform of the 30S subunit. This is Small ribosomal subunit protein bS18 from Enterococcus faecalis (strain ATCC 700802 / V583).